The primary structure comprises 311 residues: Probable manganese-dependent inorganic pyrophosphatase (311 aa).

Mn(2+) contacts are provided by His9, Asp13, Asp15, Asp77, His99, and Asp151.

Belongs to the PPase class C family. Mn(2+) is required as a cofactor.

The protein localises to the cytoplasm. It carries out the reaction diphosphate + H2O = 2 phosphate + H(+). The sequence is that of Probable manganese-dependent inorganic pyrophosphatase from Streptococcus agalactiae serotype III (strain NEM316).